A 1067-amino-acid chain; its full sequence is MPLNKDIKKVLVIGSGPIIIGQAAEFDYSGTQACQALKEEGIEVVLVNSNPATIMTDKEIADKVYLEPLTVEFVEKVIEKERPDSLLAGMGGQTGLNLAVELYEKGILDKYNVKVIGTSIESIKEGEDRELFRDMMNRINQPVIQSEIITDLDSGIAFARKIGYPVIVRPAYTLGGTGGGIANNEEELIETLTSGLQLSTIGQVLLEKSVKGWKEIEYEVMRDSFGNCITVCNMENIDPVGIHTGDSIVVAPSQTLSDKEYQMLRSASIDIINAVGIKGGCNVQFALNPHSFEYAVIEINPRVSRSSALASKATGYPIAKVAAKIALGYGLDEIKNAVTGMTYACFEPSLDYVVVKIPKWPFDKFQGADRVLGTKMMATGEIMAIGSNFEAAFLKGIRSLEIGKYSLEHKKFKDLSMYELRERVVSPDDERIFALAEMLRRGYRIDMVSKITGIDIFFLEKFRWLVEEEQKLKQSTIDDLNREWLLKLKRRGFSDKAIADMLKVSPDEIYRLRDIWHIKPSYKMVDTCGGEFEALSPYYYSTYEQYDEVVVSDNKKVVVIGSGPIRIGQGIEFDYASVHCVMALRKQGIETIVINNNPETVSTDFSISDKLYFEPLTEEDVLNIIDKENPDGVILQFGGQTAIKLAKFLKEKNIPTLGTTSDQIDLAEDREQFDDLLERLNIARPKGKGVWSLEEGLEEARRLGFPILVRPSFVLGGQGMEITHDEEELTYYLTNAFEKDSKNPILIDKYLMGREIEVDAISDGEDVLVPGIMEHLERAGVHSGDSITMYPAQNISDKIKEDVLDYTKKLALSIGIKGMINIQFIEFEGKLYVIEVNPRASRTVPYISKVSGVPIVDIATRIMLGEKLKDLGYGTGVYKEPELVSVKVPVFSTQKLPNVEVSLGPEMRSTGEVLGVGRNVFEALYKGFVGASMYTGDKGKTILATIKKHDKKEFMELSKDLDKLGYNFIATTGTANELREAGIDAKEVRRIGEESPNIMDLIKNKEIDLVVNTPTKANDSKRDGFHIRRAAIERNIGVMTSLDTLKALVELQKEGAHNRELEVFNLI.

The interval 1 to 401 (MPLNKDIKKV…AFLKGIRSLE (401 aa)) is carboxyphosphate synthetic domain. The ATP site is built by arginine 129, arginine 169, glycine 175, glycine 176, lysine 208, valine 210, glutamate 215, glycine 241, isoleucine 242, histidine 243, glutamine 284, and glutamate 298. In terms of domain architecture, ATP-grasp 1 spans 133 to 327 (RDMMNRINQP…IAKVAAKIAL (195 aa)). Residues glutamine 284, glutamate 298, and asparagine 300 each coordinate Mg(2+). Glutamine 284, glutamate 298, and asparagine 300 together coordinate Mn(2+). Residues 402–549 (IGKYSLEHKK…YSTYEQYDEV (148 aa)) are oligomerization domain. Residues 550–932 (VVSDNKKVVV…ALYKGFVGAS (383 aa)) form a carbamoyl phosphate synthetic domain region. The ATP-grasp 2 domain occupies 674-864 (DDLLERLNIA…IVDIATRIML (191 aa)). Residues arginine 710, lysine 749, leucine 751, glutamate 755, glycine 780, valine 781, histidine 782, serine 783, glutamine 823, and glutamate 835 each coordinate ATP. Positions 823, 835, and 837 each coordinate Mg(2+). The Mn(2+) site is built by glutamine 823, glutamate 835, and asparagine 837. The 135-residue stretch at 933–1067 (MYTGDKGKTI…NRELEVFNLI (135 aa)) folds into the MGS-like domain. Positions 933 to 1067 (MYTGDKGKTI…NRELEVFNLI (135 aa)) are allosteric domain.

It belongs to the CarB family. As to quaternary structure, composed of two chains; the small (or glutamine) chain promotes the hydrolysis of glutamine to ammonia, which is used by the large (or ammonia) chain to synthesize carbamoyl phosphate. Tetramer of heterodimers (alpha,beta)4. It depends on Mg(2+) as a cofactor. The cofactor is Mn(2+).

The enzyme catalyses hydrogencarbonate + L-glutamine + 2 ATP + H2O = carbamoyl phosphate + L-glutamate + 2 ADP + phosphate + 2 H(+). It carries out the reaction hydrogencarbonate + NH4(+) + 2 ATP = carbamoyl phosphate + 2 ADP + phosphate + 2 H(+). Its pathway is amino-acid biosynthesis; L-arginine biosynthesis; carbamoyl phosphate from bicarbonate: step 1/1. It participates in pyrimidine metabolism; UMP biosynthesis via de novo pathway; (S)-dihydroorotate from bicarbonate: step 1/3. Functionally, large subunit of the glutamine-dependent carbamoyl phosphate synthetase (CPSase). CPSase catalyzes the formation of carbamoyl phosphate from the ammonia moiety of glutamine, carbonate, and phosphate donated by ATP, constituting the first step of 2 biosynthetic pathways, one leading to arginine and/or urea and the other to pyrimidine nucleotides. The large subunit (synthetase) binds the substrates ammonia (free or transferred from glutamine from the small subunit), hydrogencarbonate and ATP and carries out an ATP-coupled ligase reaction, activating hydrogencarbonate by forming carboxy phosphate which reacts with ammonia to form carbamoyl phosphate. The polypeptide is Carbamoyl phosphate synthase large chain (Clostridium perfringens (strain SM101 / Type A)).